The sequence spans 115 residues: Large ribosomal subunit protein P1 (115 aa).

Positions Gln-56–Glu-73 are enriched in low complexity. Residues Gln-56–Gly-115 form a disordered region. The segment covering Gly-74–Ser-106 has biased composition (acidic residues).

Belongs to the eukaryotic ribosomal protein P1/P2 family. As to quaternary structure, part of the 50S ribosomal subunit. Homodimer, it forms part of the ribosomal stalk which helps the ribosome interact with GTP-bound translation factors. Forms a heptameric uL10/P0(P1)2(P1)2(P1)2 complex, where uL10/P0 forms an elongated spine to which the P1 dimers bind in a sequential fashion.

Functionally, forms part of the ribosomal stalk, playing a central role in the interaction of the ribosome with GTP-bound translation factors. The protein is Large ribosomal subunit protein P1 of Haloarcula marismortui (strain ATCC 43049 / DSM 3752 / JCM 8966 / VKM B-1809) (Halobacterium marismortui).